The chain runs to 98 residues: Large ribosomal subunit protein bL25 (98 aa).

The interval 1–23 (MANFVLNAQARAEDKQGKGASRR) is disordered.

Belongs to the bacterial ribosomal protein bL25 family. As to quaternary structure, part of the 50S ribosomal subunit; part of the 5S rRNA/L5/L18/L25 subcomplex. Contacts the 5S rRNA. Binds to the 5S rRNA independently of L5 and L18.

Its function is as follows. This is one of the proteins that binds to the 5S RNA in the ribosome where it forms part of the central protuberance. In Acinetobacter baumannii (strain ATCC 17978 / DSM 105126 / CIP 53.77 / LMG 1025 / NCDC KC755 / 5377), this protein is Large ribosomal subunit protein bL25.